Reading from the N-terminus, the 1452-residue chain is Arf-GAP with Rho-GAP domain, ANK repeat and PH domain-containing protein 1 (1452 aa).

An SAM domain is found at 6-70; the sequence is DAALSVAEWL…LAGLHRAHAP (65 aa). The interval 81 to 90 is required for interaction with SH3KBP1; the sequence is PVPMKRHIFR. Disordered stretches follow at residues 87-258 and 271-304; these read HIFR…LPSR and EGEELSGDDSEDDDDHAYEGIPNGGWPTSGLNPP. Composition is skewed to pro residues over residues 92-104, 154-167, and 205-225; these read PPVPVTPPEPPPT, SVPPVPPRTGPPYP, and PLQPPSPPPCPPVIPPKPPRL. Acidic residues-rich tracts occupy residues 228–239 and 271–286; these read EFDDSDYDDVPE and EGEELSGDDSEDDDDH. Position 232 is a phosphoserine (Ser-232). Residue Tyr-234 is modified to Phosphotyrosine; by PTK6. One can recognise a PH 1 domain in the interval 329–421; that stretch reads PVIKAGWLDK…WMQALQQAVV (93 aa). Position 430 is a phosphoserine (Ser-430). The PH 2 domain maps to 442–531; the sequence is QPDRAGSLEL…WLEAMQGAIA (90 aa). Tyr-506 is modified (phosphotyrosine). The region spanning 537 to 662 is the Arf-GAP domain; the sequence is SEVAERIWAA…RYHPLFGNQE (126 aa). A C4-type zinc finger spans residues 552-575; it reads CADCGAAQPDWASINLCVVICKRC. Residue Ser-740 is modified to Phosphoserine. Residues 745–852 form the PH 3 domain; it reads TVSHSGFLYK…WVKCIAKAFV (108 aa). In terms of domain architecture, Rho-GAP spans 956-1141; the sequence is ASLGDTLSEQ…DLINHYVVVF (186 aa). The region spanning 1174 to 1263 is the Ras-associating domain; sequence GDFICTVYLE…SHLVVKKYQS (90 aa). The 123-residue stretch at 1276–1398 folds into the PH 4 domain; it reads GDTKHGMMKF…WFATFLSVQH (123 aa). Residues Ser-1430 and Ser-1437 each carry the phosphoserine modification.

As to quaternary structure, interacts with SH3KBP1/CIN85 (via SH3 domains). The interaction is independent of EGF and does not affect ARAP1 GTPase-activating activity but is involved in regulating ubiquitination and endocytic trafficking of EGFR. ARAP1 competes with E3 ubiquitin-protein ligase CBL for binding to SH3KBP1, preventing interaction of CBL with SH3KBP1; this is likely to regulate SH3KBP1-mediated internalization of EGFR. Interacts with TNFRSF10A. In terms of processing, phosphorylated by PTK6 following EGF stimulation which enhances EGFR signaling by delaying EGFR down-regulation; the interaction is mediated by the SH2 domain of PTK6. Phosphorylation promotes association with the Golgi apparatus and endosomes. Expressed in the retina where it is detected in Mueller glia (at protein level). Also detected in the retinal pigment epithelium (at protein level). Expressed in osteoclasts (at protein level).

It is found in the cytoplasm. Its subcellular location is the golgi apparatus. The protein resides in the trans-Golgi network. It localises to the golgi stack membrane. The protein localises to the cell membrane. It is found in the endosome. Its subcellular location is the multivesicular body. The protein resides in the cell projection. It localises to the ruffle. The protein localises to the podosome. It is found in the early endosome. In terms of biological role, phosphatidylinositol 3,4,5-trisphosphate-dependent GTPase-activating protein that modulates actin cytoskeleton remodeling by regulating ARF and RHO family members. Activated by phosphatidylinositol 3,4,5-trisphosphate (PtdIns(3,4,5)P3) binding and, to a lesser extent, by phosphatidylinositol 3,4-bisphosphate (PtdIns(3,4)P2) binding. Has a preference for ARF1 and ARF5. Positively regulates the ring size of circular dorsal ruffles and promotes macropinocytosis. Acts as a bridging factor in osteoclasts to control actin and membrane dynamics. Regulates the condensing of osteoclast podosomes into sealing zones which segregate the bone-facing membrane from other membrane domains and are required for osteoclast resorption activity. Also regulates recruitment of the AP-3 complex to endosomal membranes and trafficking of lysosomal membrane proteins to the ruffled membrane border of osteoclasts to modulate bone resorption. Regulates the endocytic trafficking of EGFR. Regulates the incorporation of CD63 and CD9 into multivesicular bodies. Required in the retinal pigment epithelium (RPE) for photoreceptor survival due to its role in promoting RPE phagocytosis. In Mus musculus (Mouse), this protein is Arf-GAP with Rho-GAP domain, ANK repeat and PH domain-containing protein 1.